Reading from the N-terminus, the 317-residue chain is Ribosomal protein L11 methyltransferase (317 aa).

Thr158, Gly179, Asp201, and Asn244 together coordinate S-adenosyl-L-methionine.

It belongs to the methyltransferase superfamily. PrmA family.

Its subcellular location is the cytoplasm. It carries out the reaction L-lysyl-[protein] + 3 S-adenosyl-L-methionine = N(6),N(6),N(6)-trimethyl-L-lysyl-[protein] + 3 S-adenosyl-L-homocysteine + 3 H(+). Methylates ribosomal protein L11. This chain is Ribosomal protein L11 methyltransferase, found in Streptococcus pyogenes serotype M18 (strain MGAS8232).